The primary structure comprises 434 residues: UDP-N-acetylglucosamine 1-carboxyvinyltransferase 1 (434 aa).

22 to 23 (KN) is a phosphoenolpyruvate binding site. Residue Arg93 coordinates UDP-N-acetyl-alpha-D-glucosamine. Catalysis depends on Cys117, which acts as the Proton donor. Position 117 is a 2-(S-cysteinyl)pyruvic acid O-phosphothioketal (Cys117). Residues 122–126 (RPIDQ), Asp306, and Val328 contribute to the UDP-N-acetyl-alpha-D-glucosamine site.

It belongs to the EPSP synthase family. MurA subfamily.

It is found in the cytoplasm. It carries out the reaction phosphoenolpyruvate + UDP-N-acetyl-alpha-D-glucosamine = UDP-N-acetyl-3-O-(1-carboxyvinyl)-alpha-D-glucosamine + phosphate. Its pathway is cell wall biogenesis; peptidoglycan biosynthesis. Its function is as follows. Cell wall formation. Adds enolpyruvyl to UDP-N-acetylglucosamine. This is UDP-N-acetylglucosamine 1-carboxyvinyltransferase 1 from Bacillus cereus (strain ATCC 10987 / NRS 248).